The primary structure comprises 907 residues: Leucine-rich repeat-containing G-protein coupled receptor 5 (907 aa).

The first 21 residues, 1-21 (MDTSRLGVLLSLPVLLQLATG), serve as a signal peptide directing secretion. Topologically, residues 22 to 561 (GSSPRSGVLL…EHLLDGWLIR (540 aa)) are extracellular. An LRRNT domain is found at 25-66 (PRSGVLLRGCPTHCHCEPDGRMLLRVDCSDLGLSELPSNLSV). Cystine bridges form between Cys34–Cys40 and Cys38–Cys52. 2 N-linked (GlcNAc...) asparagine glycosylation sites follow: Asn63 and Asn77. LRR repeat units follow at residues 67–90 (FTSYLDLSMNNISQLLPNPLPSLR), 91–112 (FLEELRLAGNALTYIPKGAFTG), 115–136 (SLKVLMLQNNQLRHVPTEALQN), 139–160 (SLQSLRLDANHISYVPPSCFSG), 163–184 (SLRHLWLDDNALTEIPVQAFRS), 187–208 (ALQAMTLALNKIHHIPDYAFGN), 211–232 (SLVVLHLHNNRIHSLGKKCFDG), 235–256 (SLETLDLNYNNLDEFPTAIRTL), 258–279 (NLKELGFHSNNIRSIPEKAFVG), 282–303 (SLITIHFYDNPIQFVGRSAFQH), 306–328 (ELRTLTLNGASQITEFPDLTGTA), 329–350 (NLESLTLTGAQISSLPQTVCNQ), 353–374 (NLQVLDLSYNLLEDLPSFSVCQ), 375–396 (KLQKIDLRHNEIYEIKVDTFQQ), 399–420 (SLRSLNLAWNKIAIIHPNAFST), and 423–446 (SLIKLDLSSNLLSSFPITGLHGLT). An N-linked (GlcNAc...) asparagine glycan is attached at Asn208. Cys348 and Cys373 form a disulfide bridge. An intrachain disulfide couples Cys479 to Cys541. The N-linked (GlcNAc...) asparagine glycan is linked to Asn500. A helical transmembrane segment spans residues 562–582 (IGVWTIAVLALTCNALVTSTV). The Cytoplasmic portion of the chain corresponds to 583-593 (FRSPLYISPIK). The helical transmembrane segment at 594–614 (LLIGVIAAVNMLTGVSSAVLA) threads the bilayer. Topologically, residues 615-638 (GVDAFTFGSFARHGAWWENGVGCH) are extracellular. A disulfide bridge connects residues Cys637 and Cys712. The chain crosses the membrane as a helical span at residues 639-659 (VIGFLSIFASESSVFLLTLAA). Residues 660-682 (LERGFSVKYSAKFETKAPFSSLK) are Cytoplasmic-facing. Residues 683–703 (VIILLCALLALTMAAVPLLGG) form a helical membrane-spanning segment. Residues 704–722 (SKYGASPLCLPLPFGEPST) are Extracellular-facing. A helical membrane pass occupies residues 723-743 (MGYMVALILLNSLCFLMMTIA). The Cytoplasmic segment spans residues 744–767 (YTKLYCNLDKGDLENIWDCSMVKH). A helical membrane pass occupies residues 768–788 (IALLLFTNCILNCPVAFLSFS). Residues 789–802 (SLINLTFISPEVIK) lie on the Extracellular side of the membrane. Asn792 carries an N-linked (GlcNAc...) asparagine glycan. Residues 803 to 823 (FILLVVVPLPACLNPLLYILF) traverse the membrane as a helical segment. Topologically, residues 824 to 907 (NPHFKEDLVS…LSSVAFVPCL (84 aa)) are cytoplasmic.

Belongs to the G-protein coupled receptor 1 family. As to quaternary structure, identified in a complex composed of RNF43, LGR5 and RSPO1. Also interacts with other R-spondin ligands, including RSPO2, RSPO3 and RSPO4. In terms of tissue distribution, expressed in skeletal muscle, placenta, spinal cord, and various region of brain. Expressed at the base of crypts in colonic and small mucosa stem cells. In premalignant cancer expression is not restricted to the cript base. Overexpressed in cancers of the ovary, colon and liver.

The protein localises to the cell membrane. It is found in the golgi apparatus. The protein resides in the trans-Golgi network membrane. Its function is as follows. Receptor for R-spondins that potentiates the canonical Wnt signaling pathway and acts as a stem cell marker of the intestinal epithelium and the hair follicle. Upon binding to R-spondins (RSPO1, RSPO2, RSPO3 or RSPO4), associates with phosphorylated LRP6 and frizzled receptors that are activated by extracellular Wnt receptors, triggering the canonical Wnt signaling pathway to increase expression of target genes. In contrast to classical G-protein coupled receptors, does not activate heterotrimeric G-proteins to transduce the signal. Involved in the development and/or maintenance of the adult intestinal stem cells during postembryonic development. The polypeptide is Leucine-rich repeat-containing G-protein coupled receptor 5 (LGR5) (Homo sapiens (Human)).